An 86-amino-acid chain; its full sequence is Cell division topological specificity factor (86 aa).

The protein belongs to the MinE family.

Functionally, prevents the cell division inhibition by proteins MinC and MinD at internal division sites while permitting inhibition at polar sites. This ensures cell division at the proper site by restricting the formation of a division septum at the midpoint of the long axis of the cell. The protein is Cell division topological specificity factor of Shewanella loihica (strain ATCC BAA-1088 / PV-4).